Reading from the N-terminus, the 150-residue chain is Large ribosomal subunit protein bL9 (150 aa).

Belongs to the bacterial ribosomal protein bL9 family.

In terms of biological role, binds to the 23S rRNA. The protein is Large ribosomal subunit protein bL9 of Stenotrophomonas maltophilia (strain R551-3).